The following is a 480-amino-acid chain: 11S globulin subunit beta (480 aa).

A signal peptide spans 1-21 (MARSSLFTFLCLAVFINGCLS). Gln22 is subject to Pyrrolidone carboxylic acid. Disulfide bonds link Cys48-Cys81 and Cys124-Cys303. 2 Cupin type-1 domains span residues 51–251 (ENLR…GLVR) and 309–458 (QNIG…EEAQ). Mg(2+) is bound by residues Lys408 and Arg468.

Belongs to the 11S seed storage protein (globulins) family. In terms of assembly, hexamer; each subunit is composed of an acidic and a basic chain derived from a single precursor and linked by a disulfide bond.

Functionally, this is a seed storage protein. In Cucurbita maxima (Pumpkin), this protein is 11S globulin subunit beta.